Consider the following 264-residue polypeptide: ATP synthase subunit a (264 aa).

Helical transmembrane passes span 39–59, 97–117, 139–159, 205–225, and 239–259; these read LDTLIISVVLGALFILIFYIV, VAPLALTIFIWVFLMNFMDLV, TADPTLTFAMSITVFVLVIFY, LFGNLFAGELIFILIALLPWW, and LLVITVQAFIFMMLTVVYISL.

It belongs to the ATPase A chain family. As to quaternary structure, F-type ATPases have 2 components, CF(1) - the catalytic core - and CF(0) - the membrane proton channel. CF(1) has five subunits: alpha(3), beta(3), gamma(1), delta(1), epsilon(1). CF(0) has three main subunits: a(1), b(2) and c(9-12). The alpha and beta chains form an alternating ring which encloses part of the gamma chain. CF(1) is attached to CF(0) by a central stalk formed by the gamma and epsilon chains, while a peripheral stalk is formed by the delta and b chains.

It localises to the cell inner membrane. Its function is as follows. Key component of the proton channel; it plays a direct role in the translocation of protons across the membrane. In Coxiella burnetii (strain CbuK_Q154) (Coxiella burnetii (strain Q154)), this protein is ATP synthase subunit a.